Consider the following 95-residue polypeptide: Large ribosomal subunit protein uL23 (95 aa).

The protein belongs to the universal ribosomal protein uL23 family. Part of the 50S ribosomal subunit. Contacts protein L29, and trigger factor when it is bound to the ribosome.

One of the early assembly proteins it binds 23S rRNA. One of the proteins that surrounds the polypeptide exit tunnel on the outside of the ribosome. Forms the main docking site for trigger factor binding to the ribosome. The sequence is that of Large ribosomal subunit protein uL23 from Bacillus pumilus (strain SAFR-032).